Consider the following 469-residue polypeptide: SHC-transforming protein 1 (469 aa).

Positions 1-26 (MNKLSGGGGRRTRVEGGQLGGEEWTR) are disordered. Phosphoserine is present on serine 29. Lysine 44 carries the post-translational modification N6-acetyllysine. Residues 46–229 (MGPGVSYLVR…AGFDGSAWDE (184 aa)) enclose the PID domain. The interval 230-373 (EEEELPDHQY…SMAEQLQGES (144 aa)) is CH1. Phosphotyrosine occurs at positions 239, 240, and 313. The segment at 322 to 344 (ARQAGGGAGPPNPSVNGSAPRDL) is disordered. Serine 339 carries the post-translational modification Phosphoserine. The SH2 domain occupies 374–465 (WFHGKLSRRE…GSELCLQQPV (92 aa)).

As to quaternary structure, interacts with CPNE3; this interaction may mediate the binding of CPNE3 with ERBB2. Interacts with the NPXY motif of tyrosine-phosphorylated IGF1R and INSR in vitro via the PID domain. Once activated, binds to GRB2. Interacts with tyrosine-phosphorylated CD3T and DDR2. Interacts with the N-terminal region of APS. Interacts with phosphorylated LRP1 and IRS4. Interacts with INPP5D/SHIP1 and INPPL1/SHIP2. Interacts with ALK, GAB2, GRB7 and KIT. Interacts with PTPN6/SHP (tyrosine phosphorylated). Identified in a complex containing FGFR4, NCAM1, CDH2, PLCG1, FRS2A, SRC, SHC1, GAP43 and CTTN. Interacts with EPHB1 and GRB2; activates the MAPK/ERK cascade to regulate cell migration. Interacts with PDGFRB (tyrosine-phosphorylated). Interacts with ERBB4. Interacts with TEK/TIE2 (tyrosine-phosphorylated). Interacts with PTK2/FAK1. Interacts with FLT4 (tyrosine-phosphorylated). Interacts with the Trk receptors NTRK1, NTRK2 and NTRK3; in a phosphotyrosine-dependent manner. Interacts with CEACAM1; this interaction is CEACAM1-phosphorylation-dependent and mediates interaction with EGFR or INSR resulting in decrease coupling of SHC1 to the MAPK3/ERK1-MAPK1/ERK2 pathway. Interacts (via PID domain) with PEAK1 (when phosphorylated). Found in a complex with PPP1CA, PPP1CC, SHC1 and PEAK1. Phosphorylated by activated epidermal growth factor receptor. Phosphorylated in response to KIT signaling. Tyrosine phosphorylated in response to FLT3 signaling and by ligand-activated ALK. Tyrosine phosphorylated by TEK/TIE2. Tyrosine phosphorylated by ligand-activated PDGFRB. May be tyrosine phosphorylated by activated PTK2/FAK1. Dephosphorylation by PTPN2 may regulate interaction with GRB2. Phosphorylated in response to FLT4 signaling. Tyrosine phosphorylated by activated PTK2B/PYK2.

It localises to the cytoplasm. The protein localises to the cell junction. The protein resides in the focal adhesion. Signaling adapter that couples activated growth factor receptors to signaling pathways. Participates in a signaling cascade initiated by activated KIT and KITLG/SCF. Participates in signaling downstream of the angiopoietin receptor TEK/TIE2, and plays a role in the regulation of endothelial cell migration and sprouting angiogenesis. This is SHC-transforming protein 1 (Shc1) from Rattus norvegicus (Rat).